The sequence spans 255 residues: 2-(S)-hydroxypropyl-CoM dehydrogenase 3 (255 aa).

NAD(+) contacts are provided by residues I19, D38, 64–65 (DV), and N91. S143 and Y156 together coordinate (S)-2-hydroxypropyl-coenzyme M. Y156 (proton acceptor) is an active-site residue. K160 contributes to the NAD(+) binding site. T188 serves as a coordination point for (S)-2-hydroxypropyl-coenzyme M. An NAD(+)-binding site is contributed by 189–193 (VTSTG). A (S)-2-hydroxypropyl-coenzyme M-binding site is contributed by Y215.

Belongs to the short-chain dehydrogenases/reductases (SDR) family. As to quaternary structure, homotetramer.

The enzyme catalyses (S)-2-hydroxypropyl-coenzyme M + NAD(+) = 2-oxopropyl-coenzyme M + NADH + H(+). Not inhibited by 2-(2-methyl-2-hydroxypropylthio)ethanesulfonate (M-HPC), an achiral analog of both R-HPC and S-HPC. In terms of biological role, involved in aliphatic epoxide carboxylation. Catalyzes the reversible oxidation of (2S)-2-hydroxypropyl-coenzyme M (S-HPC) to 2-oxopropyl-coenzyme M (2-KPC). The enzyme is highly specific for the S enantiomers. In vitro can also use the aliphatic ketone 2-butanone and the aliphatic alcohol 2-propanol, and shows an inherent stereoselectivity for 2-butanone reduction. The sequence is that of 2-(S)-hydroxypropyl-CoM dehydrogenase 3 from Xanthobacter autotrophicus (strain ATCC BAA-1158 / Py2).